The following is a 464-amino-acid chain: UDP-N-acetylmuramate--L-alanine ligase (464 aa).

Position 112–118 (112–118 (GTHGKTT)) interacts with ATP.

The protein belongs to the MurCDEF family.

The protein localises to the cytoplasm. The catalysed reaction is UDP-N-acetyl-alpha-D-muramate + L-alanine + ATP = UDP-N-acetyl-alpha-D-muramoyl-L-alanine + ADP + phosphate + H(+). It participates in cell wall biogenesis; peptidoglycan biosynthesis. Functionally, cell wall formation. This Chromobacterium violaceum (strain ATCC 12472 / DSM 30191 / JCM 1249 / CCUG 213 / NBRC 12614 / NCIMB 9131 / NCTC 9757 / MK) protein is UDP-N-acetylmuramate--L-alanine ligase.